The following is a 633-amino-acid chain: DNA mismatch repair protein MutL (633 aa).

This sequence belongs to the DNA mismatch repair MutL/HexB family.

This protein is involved in the repair of mismatches in DNA. It is required for dam-dependent methyl-directed DNA mismatch repair. May act as a 'molecular matchmaker', a protein that promotes the formation of a stable complex between two or more DNA-binding proteins in an ATP-dependent manner without itself being part of a final effector complex. The polypeptide is DNA mismatch repair protein MutL (Pseudomonas putida (strain W619)).